Consider the following 80-residue polypeptide: Bacteriochlorophyll c-binding protein (80 aa).

Position 25 (H25) interacts with a bacteriochlorophyll c. The disordered stretch occupies residues 49 to 80 (PGVSRSGSGEGAFSSSPSNGFRPKRIRSRFNR). A propeptide spanning residues 54 to 80 (SGSGEGAFSSSPSNGFRPKRIRSRFNR) is cleaved from the precursor. A compositionally biased stretch (basic residues) spans 70–80 (RPKRIRSRFNR).

It belongs to the BChl C/E-binding protein family.

The protein resides in the chlorosome. It localises to the chlorosome envelope. Functionally, component of the photosynthetic apparatus. The light harvesting B740 complex binds bacteriochlorophyll c. This is Bacteriochlorophyll c-binding protein (cmsA) from Chloroflexus aurantiacus (strain ATCC 29366 / DSM 635 / J-10-fl).